A 535-amino-acid chain; its full sequence is Reticuline oxidase (535 aa).

The signal sequence occupies residues 1 to 23 (MMCRSLTLRFFLFIVLLQTCVRG). The N-linked (GlcNAc...) asparagine glycan is linked to asparagine 42. The FAD-binding PCMH-type domain maps to 71–245 (TVSKPSFIVM…YAWKIKLLPV (175 aa)). Residues 108-170 (HSYEGLSYTA…DTLGFTAGWC (63 aa)) constitute a cross-link (6-(S-cysteinyl)-8alpha-(pros-histidyl)-FAD (His-Cys)). Asparagine 475 is a glycosylation site (N-linked (GlcNAc...) asparagine).

It belongs to the oxygen-dependent FAD-linked oxidoreductase family. FAD is required as a cofactor. It depends on a metal cation as a cofactor. The FAD cofactor is bound via a bicovalent 6-S-cysteinyl, 8alpha-N1-histidyl FAD linkage. As to expression, expressed in roots and stems. Not detected in leaves or reproductive organs. Restricted to the parietal region of sieve elements adjacent or proximal to laticifers.

The protein resides in the cytoplasmic vesicle. It carries out the reaction (S)-reticuline + O2 = (S)-scoulerine + H2O2 + H(+). The protein operates within alkaloid biosynthesis; (S)-scoulerine biosynthesis; (S)-scoulerine from (S)-reticuline: step 1/1. Functionally, oxygen-dependent FAD-dependent oxidoreductase essential to the formation of benzophenanthridine alkaloids in the response of plants to pathogenic attack. Catalyzes the stereospecific conversion of the N-methyl moiety of (S)-reticuline into the berberine bridge carbon of (S)-scoulerine. Involved in the biosynthesis of sanguinarine. The sequence is that of Reticuline oxidase (BBE1) from Papaver somniferum (Opium poppy).